An 882-amino-acid chain; its full sequence is DNA mismatch repair protein MutS (882 aa).

Position 640-647 (640-647 (GPNMGGKS)) interacts with ATP.

The protein belongs to the DNA mismatch repair MutS family.

In terms of biological role, this protein is involved in the repair of mismatches in DNA. It is possible that it carries out the mismatch recognition step. This protein has a weak ATPase activity. The sequence is that of DNA mismatch repair protein MutS from Albidiferax ferrireducens (strain ATCC BAA-621 / DSM 15236 / T118) (Rhodoferax ferrireducens).